A 327-amino-acid chain; its full sequence is Putative HTH-type transcriptional regulatory protein Mbar_A2318 (327 aa).

An HTH cro/C1-type domain is found at 132–190 (LKKARMGQSMSLGTLASMVGVSRRTISKYEEEGMDASIDVVLQLEDIFGVELAKPINIL). The segment at residues 143-162 (LGTLASMVGVSRRTISKYEE) is a DNA-binding region (H-T-H motif).

In Methanosarcina barkeri (strain Fusaro / DSM 804), this protein is Putative HTH-type transcriptional regulatory protein Mbar_A2318.